Consider the following 92-residue polypeptide: UPF0213 protein H16_B0156 (92 aa).

Residues 5-80 (SAWYLYLLEC…KRLSSTQKRA (76 aa)) enclose the GIY-YIG domain.

It belongs to the UPF0213 family.

The sequence is that of UPF0213 protein H16_B0156 from Cupriavidus necator (strain ATCC 17699 / DSM 428 / KCTC 22496 / NCIMB 10442 / H16 / Stanier 337) (Ralstonia eutropha).